The sequence spans 231 residues: Protein fmp52-2, mitochondrial (231 aa).

Residues 1-46 (MTMTTAAVFGCTGAVGSQILATLLAIDTFPSVKTISRRLPNVQSPK) constitute a mitochondrion transit peptide.

Belongs to the FMP52 family.

It is found in the mitochondrion outer membrane. In Neosartorya fischeri (strain ATCC 1020 / DSM 3700 / CBS 544.65 / FGSC A1164 / JCM 1740 / NRRL 181 / WB 181) (Aspergillus fischerianus), this protein is Protein fmp52-2, mitochondrial (fmp522).